Reading from the N-terminus, the 156-residue chain is Ribosomal RNA large subunit methyltransferase H (156 aa).

S-adenosyl-L-methionine contacts are provided by residues leucine 73, glycine 104, and leucine 123–leucine 128.

It belongs to the RNA methyltransferase RlmH family. As to quaternary structure, homodimer.

The protein resides in the cytoplasm. It carries out the reaction pseudouridine(1915) in 23S rRNA + S-adenosyl-L-methionine = N(3)-methylpseudouridine(1915) in 23S rRNA + S-adenosyl-L-homocysteine + H(+). Its function is as follows. Specifically methylates the pseudouridine at position 1915 (m3Psi1915) in 23S rRNA. The protein is Ribosomal RNA large subunit methyltransferase H of Ralstonia nicotianae (strain ATCC BAA-1114 / GMI1000) (Ralstonia solanacearum).